A 426-amino-acid polypeptide reads, in one-letter code: Proline--tRNA ligase (426 aa).

Belongs to the class-II aminoacyl-tRNA synthetase family. ProS type 2 subfamily. As to quaternary structure, homodimer.

Its subcellular location is the cytoplasm. It catalyses the reaction tRNA(Pro) + L-proline + ATP = L-prolyl-tRNA(Pro) + AMP + diphosphate. Catalyzes the attachment of proline to tRNA(Pro) in a two-step reaction: proline is first activated by ATP to form Pro-AMP and then transferred to the acceptor end of tRNA(Pro). The protein is Proline--tRNA ligase of Rickettsia peacockii (strain Rustic).